Consider the following 1755-residue polypeptide: Transposon Ty1-GR3 Gag-Pol polyprotein (1755 aa).

3 stretches are compositionally biased toward polar residues: residues 1–10 (MESQQLSNYP), 48–60 (TKANSQQTTTPAS), and 127–152 (QSQFPQYPSSVGTPLSTPSPESGNTF). 3 disordered regions span residues 1 to 93 (MESQ…MMTQ), 126 to 173 (PQSQ…RPPP), and 352 to 421 (GSRN…SKST). A compositionally biased stretch (low complexity) spans 153–165 (TDSSSADSDMTST). The RNA-binding stretch occupies residues 299-401 (NNGIHINNKV…NSKSKTARAH (103 aa)). Positions 402-418 (NVSTSNNSPSTDNDSIS) are enriched in low complexity. Position 416 is a phosphoserine (Ser-416). The active-site For protease activity; shared with dimeric partner is Asp-461. The interval 583–640 (NVHTSESTRKYPYPFIHRMLAHANAQTIRYSLKNNTITYFNESDVDWSSAIDYQCPDC) is integrase-type zinc finger-like. Residues 660-835 (NSYEPFQYLH…AGLDISTLLP (176 aa)) form the Integrase catalytic domain. Asp-671 and Asp-736 together coordinate Mg(2+). The disordered stretch occupies residues 956–1172 (SKAVSPTDST…LGGIGDSNAY (217 aa)). Over residues 960-969 (SPTDSTPPST) the composition is skewed to low complexity. 2 stretches are compositionally biased toward polar residues: residues 1005–1015 (STPQISNIEST) and 1031–1043 (MSQSNTHESSYAS). Positions 1044-1053 (KSKDFRHSDS) are enriched in basic and acidic residues. Polar residues-rich tracts occupy residues 1054-1082 (YSDNETNHTNVPISSTGGTNNKTVPQTSE) and 1095-1106 (SIDTSSSESNSL). Residues 1178-1212 (KKRSLEDNETEIKVSRDTWNTKNMRSLEPPRSKKR) carry the Bipartite nuclear localization signal motif. The Reverse transcriptase Ty1/copia-type domain occupies 1338–1476 (NNYYITQLDI…DILGLEIKYQ (139 aa)). Residues Asp-1346, Asp-1427, Asp-1428, Asp-1610, Glu-1652, and Asp-1685 each coordinate Mg(2+). Residues 1610–1752 (DASYGNQPYY…IKTFKLLTNK (143 aa)) form the RNase H Ty1/copia-type domain.

In terms of assembly, the capsid protein forms a homotrimer, from which the VLPs are assembled. The protease is a homodimer, whose active site consists of two apposed aspartic acid residues. Post-translationally, initially, virus-like particles (VLPs) are composed of the structural unprocessed proteins Gag and Gag-Pol, and also contain the host initiator methionine tRNA (tRNA(i)-Met) which serves as a primer for minus-strand DNA synthesis, and a dimer of genomic Ty RNA. Processing of the polyproteins occurs within the particle and proceeds by an ordered pathway, called maturation. First, the protease (PR) is released by autocatalytic cleavage of the Gag-Pol polyprotein yielding capsid protein p45 and a Pol-p154 precursor protein. This cleavage is a prerequisite for subsequent processing of Pol-p154 at the remaining sites to release the mature structural and catalytic proteins. Maturation takes place prior to the RT reaction and is required to produce transposition-competent VLPs.

Its subcellular location is the cytoplasm. It localises to the nucleus. It carries out the reaction DNA(n) + a 2'-deoxyribonucleoside 5'-triphosphate = DNA(n+1) + diphosphate. It catalyses the reaction Endonucleolytic cleavage to 5'-phosphomonoester.. In terms of biological role, capsid protein (CA) is the structural component of the virus-like particle (VLP), forming the shell that encapsulates the retrotransposons dimeric RNA genome. The particles are assembled from trimer-clustered units and there are holes in the capsid shells that allow for the diffusion of macromolecules. CA also has nucleocapsid-like chaperone activity, promoting primer tRNA(i)-Met annealing to the multipartite primer-binding site (PBS), dimerization of Ty1 RNA and initiation of reverse transcription. Its function is as follows. The aspartyl protease (PR) mediates the proteolytic cleavages of the Gag and Gag-Pol polyproteins after assembly of the VLP. Functionally, reverse transcriptase/ribonuclease H (RT) is a multifunctional enzyme that catalyzes the conversion of the retro-elements RNA genome into dsDNA within the VLP. The enzyme displays a DNA polymerase activity that can copy either DNA or RNA templates, and a ribonuclease H (RNase H) activity that cleaves the RNA strand of RNA-DNA heteroduplexes during plus-strand synthesis and hydrolyzes RNA primers. The conversion leads to a linear dsDNA copy of the retrotransposon that includes long terminal repeats (LTRs) at both ends. Integrase (IN) targets the VLP to the nucleus, where a subparticle preintegration complex (PIC) containing at least integrase and the newly synthesized dsDNA copy of the retrotransposon must transit the nuclear membrane. Once in the nucleus, integrase performs the integration of the dsDNA into the host genome. The polypeptide is Transposon Ty1-GR3 Gag-Pol polyprotein (TY1B-GR3) (Saccharomyces cerevisiae (strain ATCC 204508 / S288c) (Baker's yeast)).